The sequence spans 134 residues: Transcription antitermination protein NusB (134 aa).

The protein belongs to the NusB family.

In terms of biological role, involved in transcription antitermination. Required for transcription of ribosomal RNA (rRNA) genes. Binds specifically to the boxA antiterminator sequence of the ribosomal RNA (rrn) operons. In Syntrophomonas wolfei subsp. wolfei (strain DSM 2245B / Goettingen), this protein is Transcription antitermination protein NusB.